The sequence spans 459 residues: Glutamate--tRNA ligase 2 (459 aa).

The short motif at 8–18 is the 'HIGH' region element; sequence PSPTGYIHIGN. The 'KMSKS' region signature appears at 249 to 253; the sequence is GLSKR. Lys-252 contributes to the ATP binding site.

It belongs to the class-I aminoacyl-tRNA synthetase family. Glutamate--tRNA ligase type 1 subfamily. As to quaternary structure, monomer.

The protein localises to the cytoplasm. It catalyses the reaction tRNA(Glu) + L-glutamate + ATP = L-glutamyl-tRNA(Glu) + AMP + diphosphate. Its function is as follows. Catalyzes the attachment of glutamate to tRNA(Glu) in a two-step reaction: glutamate is first activated by ATP to form Glu-AMP and then transferred to the acceptor end of tRNA(Glu). The sequence is that of Glutamate--tRNA ligase 2 from Bartonella henselae (strain ATCC 49882 / DSM 28221 / CCUG 30454 / Houston 1) (Rochalimaea henselae).